Consider the following 214-residue polypeptide: Coiled-coil domain-containing protein 169 (214 aa).

Residues 56-138 are a coiled coil; sequence SEWKTRYETQ…YAFRLEQESK (83 aa). Positions 154–214 are disordered; the sequence is MTQVSGSNQV…RSNHLPKLNP (61 aa). Polar residues-rich tracts occupy residues 155 to 166 and 185 to 195; these read TQVSGSNQVSKR and HNSMNQKTTNA.

It belongs to the CCDC169 family.

This chain is Coiled-coil domain-containing protein 169 (Ccdc169), found in Mus musculus (Mouse).